Reading from the N-terminus, the 211-residue chain is SsrA-binding protein (211 aa).

The disordered stretch occupies residues 168 to 211 (KHRLRRPRAQRNTQRSVTPRRTRENKNVRGSKARSARRNVRREN). Polar residues predominate over residues 177-186 (QRNTQRSVTP). Residues 196 to 211 (RGSKARSARRNVRREN) are compositionally biased toward basic residues.

This sequence belongs to the SmpB family.

The protein localises to the cytoplasm. In terms of biological role, required for rescue of stalled ribosomes mediated by trans-translation. Binds to transfer-messenger RNA (tmRNA), required for stable association of tmRNA with ribosomes. tmRNA and SmpB together mimic tRNA shape, replacing the anticodon stem-loop with SmpB. tmRNA is encoded by the ssrA gene; the 2 termini fold to resemble tRNA(Ala) and it encodes a 'tag peptide', a short internal open reading frame. During trans-translation Ala-aminoacylated tmRNA acts like a tRNA, entering the A-site of stalled ribosomes, displacing the stalled mRNA. The ribosome then switches to translate the ORF on the tmRNA; the nascent peptide is terminated with the 'tag peptide' encoded by the tmRNA and targeted for degradation. The ribosome is freed to recommence translation, which seems to be the essential function of trans-translation. This chain is SsrA-binding protein, found in Tropheryma whipplei (strain Twist) (Whipple's bacillus).